The sequence spans 432 residues: Adenylosuccinate synthetase (432 aa).

GTP-binding positions include 13–19 (GDEGKGK) and 41–43 (GHT). Residue D14 is the Proton acceptor of the active site. Mg(2+) contacts are provided by D14 and G41. IMP is bound by residues 14-17 (DEGK), 39-42 (NAGH), T130, R144, Q225, T240, and R304. The active-site Proton donor is H42. 300 to 306 (ATTGRKR) contributes to the substrate binding site. Residues R306, 332 to 334 (KLD), and 414 to 416 (STG) each bind GTP.

It belongs to the adenylosuccinate synthetase family. As to quaternary structure, homodimer. The cofactor is Mg(2+).

It is found in the cytoplasm. The catalysed reaction is IMP + L-aspartate + GTP = N(6)-(1,2-dicarboxyethyl)-AMP + GDP + phosphate + 2 H(+). The protein operates within purine metabolism; AMP biosynthesis via de novo pathway; AMP from IMP: step 1/2. Functionally, plays an important role in the de novo pathway of purine nucleotide biosynthesis. Catalyzes the first committed step in the biosynthesis of AMP from IMP. This Alkalilimnicola ehrlichii (strain ATCC BAA-1101 / DSM 17681 / MLHE-1) protein is Adenylosuccinate synthetase.